A 558-amino-acid polypeptide reads, in one-letter code: Xylulose kinase 2 (558 aa).

Substrate-binding positions include D16, 20–23 (QSMK), S111, and D283. ATP-binding positions include T305 and 456-460 (GASAN).

The protein belongs to the FGGY kinase family. It depends on a divalent metal cation as a cofactor.

The protein localises to the cytoplasm. The enzyme catalyses D-xylulose + ATP = D-xylulose 5-phosphate + ADP + H(+). The protein operates within isoprenoid biosynthesis; carotenoid biosynthesis. Repressed by oxo-clomazone (keto-clomazone), a bleaching herbicide. In terms of biological role, mediates 1-deoxy-D-xylulose (DX) phosphorylation in the cytoplasm prior to the translocation of 1-deoxy-D-xylulose 5-phosphate into plastids. Can also phosphorylate D-xylulose (Xyl). Uses preferentially ATP as cosubstrate. This Arabidopsis thaliana (Mouse-ear cress) protein is Xylulose kinase 2.